The following is a 931-amino-acid chain: GPI ethanolamine phosphate transferase 1 (931 aa).

A topological domain (cytoplasmic) is located at residue methionine 1. The helical transmembrane segment at 2 to 22 (LLFFALGLLIHFVFFASIFDI) threads the bilayer. The Lumenal portion of the chain corresponds to 23-442 (YFTSPLVHGM…SYYHTYDRLF (420 aa)). Asparagine 128, asparagine 192, asparagine 295, and asparagine 350 each carry an N-linked (GlcNAc...) asparagine glycan. The chain crosses the membrane as a helical span at residues 443 to 463 (LGINVAVGFVGWMSYTSLLII). At 464-480 (KSHSNIPKGTRKEGKKP) the chain is on the cytoplasmic side. Residues 481–501 (HCLLLYSFIATGVLVACFLMI) form a helical membrane-spanning segment. Position 502 (glutamine 502) is a topological domain, lumenal. The helical transmembrane segment at 503–523 (ACPWTYYVYCLLPVPIWYAVL) threads the bilayer. Residues 524 to 543 (REHEVIQDLVESLLTFPRSH) are Cytoplasmic-facing. A helical transmembrane segment spans residues 544 to 564 (FVAYLLVFTLGIEVLVLSFFY). Position 565 (arginine 565) is a topological domain, lumenal. Residues 566–586 (YMLTAGLIVFAGWPFLTQLWT) traverse the membrane as a helical segment. At 587-591 (RAKIT) the chain is on the cytoplasmic side. A helical membrane pass occupies residues 592 to 612 (FLSWAFFSLLLAVFPLMPVVG). Residues 613 to 618 (RKPNLS) are Lumenal-facing. Asparagine 616 carries an N-linked (GlcNAc...) asparagine glycan. The chain crosses the membrane as a helical span at residues 619–639 (LVMGAGFLVLLLSLAVVTTLG). The Cytoplasmic portion of the chain corresponds to 640 to 649 (KRNIKLVKGE). The chain crosses the membrane as a helical span at residues 650 to 670 (LLVLLLQMLSTVLSMYVVYST). At 671–685 (HHSLLKKEGLPLMNQ) the chain is on the lumenal side. A helical transmembrane segment spans residues 686-706 (IVSWATLASSLVAPLLSSTAL). Residues 707-723 (SQRLASILLSLMSTYLL) lie on the Cytoplasmic side of the membrane. Residues 724–744 (LSTGYEALFPLVLSCLMFVWI) traverse the membrane as a helical segment. Topologically, residues 745-786 (QVEQETLQQPGVSCKQKLTSIQFTCDTDIAQFRQLCPDDIRR) are lumenal. The chain crosses the membrane as a helical span at residues 787 to 807 (AFFLVFFLLTAFFGTGNIASI). Topologically, residues 808–824 (NSFDLASVYCFLTVFSP) are cytoplasmic. A helical membrane pass occupies residues 825-845 (FMMGALMMWKILIPFVLVMCA). Topologically, residues 846–858 (FEAVQITTQLSSK) are lumenal. A helical transmembrane segment spans residues 859–879 (GLFLVVLIISDIMALHFFFLV). The Cytoplasmic portion of the chain corresponds to 880–894 (KDSGSWLDIGTSISH). Residues 895-915 (YVIVMSMTIFLVFLNGLAQLL) form a helical membrane-spanning segment. Residues 916–931 (TTKKLQLCGKPKSHLM) are Lumenal-facing.

It belongs to the PIGG/PIGN/PIGO family. PIGN subfamily.

It localises to the endoplasmic reticulum membrane. The protein operates within glycolipid biosynthesis; glycosylphosphatidylinositol-anchor biosynthesis. Functionally, ethanolamine phosphate transferase that catalyzes an ethanolamine phosphate (EtNP) transfer from phosphatidylethanolamine (PE) to the 2-OH position of the first alpha-1,4-linked mannose of the alpha-D-Man-(1-&gt;6)-alpha-D-Man-(1-&gt;4)-alpha-D-GlcN-(1-&gt;6)-(1-radyl,2-acyl-sn-glycero-3-phospho)-2-acyl-inositol (also termed H3) intermediate to generate an alpha-D-Man-(1-&gt;6)-2-PEtn-alpha-D-Man-(1-&gt;4)-alpha-D-GlcN-(1-&gt;6)-(1-radyl,2-acyl-sn-glycero-3-phospho)-2-acyl-inositol and participates in the eighth step of the glycosylphosphatidylinositol-anchor biosynthesis. May act as suppressor of replication stress and chromosome missegregation. This chain is GPI ethanolamine phosphate transferase 1, found in Mus musculus (Mouse).